We begin with the raw amino-acid sequence, 430 residues long: Phosphomethylpyrimidine synthase (430 aa).

Substrate is bound by residues N67, M96, Y125, H161, 183–185 (SRG), 224–227 (DALR), and E263. Residue H267 coordinates Zn(2+). Position 290 (Y290) interacts with substrate. Zn(2+) is bound at residue H331. [4Fe-4S] cluster contacts are provided by C406, C409, and C413.

This sequence belongs to the ThiC family. As to quaternary structure, homodimer. The cofactor is [4Fe-4S] cluster.

It carries out the reaction 5-amino-1-(5-phospho-beta-D-ribosyl)imidazole + S-adenosyl-L-methionine = 4-amino-2-methyl-5-(phosphooxymethyl)pyrimidine + CO + 5'-deoxyadenosine + formate + L-methionine + 3 H(+). The protein operates within cofactor biosynthesis; thiamine diphosphate biosynthesis. In terms of biological role, catalyzes the synthesis of the hydroxymethylpyrimidine phosphate (HMP-P) moiety of thiamine from aminoimidazole ribotide (AIR) in a radical S-adenosyl-L-methionine (SAM)-dependent reaction. The protein is Phosphomethylpyrimidine synthase of Campylobacter jejuni (strain RM1221).